Here is a 103-residue protein sequence, read N- to C-terminus: Large ribosomal subunit protein uL24 (103 aa).

The protein belongs to the universal ribosomal protein uL24 family. As to quaternary structure, part of the 50S ribosomal subunit.

In terms of biological role, one of two assembly initiator proteins, it binds directly to the 5'-end of the 23S rRNA, where it nucleates assembly of the 50S subunit. Functionally, one of the proteins that surrounds the polypeptide exit tunnel on the outside of the subunit. The sequence is that of Large ribosomal subunit protein uL24 from Listeria innocua serovar 6a (strain ATCC BAA-680 / CLIP 11262).